Consider the following 309-residue polypeptide: MKEKELVVNTKTNGSKSEDVIISISLVKKLRDATGAAMTSCKQALQEAKGDIEEAIKVLRKTNLAQMSSKLQRKADEGIVALAVDNNKGAIIEIKFETDFVARNERLQKLAMEAAQLALVHDNLTDLKNAKLSSGETLESQISQDIAVIGENIQVSRIRQVKLVDNGIIASYIHNSVAPNLGQIAVLVALEGNVESDKLTKLGKNIAMHIAATNPRFLSSNEVPESVIMQEKEIFTAQARTTGKPEKVIEKMIEGRVSKFLEETVLLEQAFVIDGKTKISEVLSNAAKELGSEIKITGFSCLKAGEVVE.

Residues 98–101 are involved in Mg(2+) ion dislocation from EF-Tu; the sequence is TDFV.

It belongs to the EF-Ts family.

Its subcellular location is the cytoplasm. Associates with the EF-Tu.GDP complex and induces the exchange of GDP to GTP. It remains bound to the aminoacyl-tRNA.EF-Tu.GTP complex up to the GTP hydrolysis stage on the ribosome. This chain is Elongation factor Ts, found in Orientia tsutsugamushi (strain Boryong) (Rickettsia tsutsugamushi).